Reading from the N-terminus, the 309-residue chain is MGINFEVSRPKAGSDTNMSNTFHTIGLIGKPNHEGTNLTLKRLHHWLTMQGYSVLVEERVASDVGSHTHSVDLLEIGANCDLAIVVGGDGNMLGAARVLARFDIAVIGVNRGNLGFLTDLPPDTFEEALSKVLEGEFDTEQRFLLEAEVHRHGELKSSNTAVNEAVLHPGKIAHMIEFEVYIDDKFMYSQRADGMIVSTPTGSTAYSLSAGGAILTPNLEAMILVPMFPHTLSCRPIVVDACSIIKLVVSPHNGDNLEVSCDGHVNLSVLPGDEIIVKRSADTLRLIHPKGHNYFHVLRTKLGWGSKLF.

Asp-89 acts as the Proton acceptor in catalysis. NAD(+) is bound by residues 89–90, 163–164, His-174, Arg-191, Asp-193, and 204–209; these read DG, NE, and TAYSLS.

This sequence belongs to the NAD kinase family. Requires a divalent metal cation as cofactor.

It is found in the cytoplasm. The enzyme catalyses NAD(+) + ATP = ADP + NADP(+) + H(+). Its function is as follows. Involved in the regulation of the intracellular balance of NAD and NADP, and is a key enzyme in the biosynthesis of NADP. Catalyzes specifically the phosphorylation on 2'-hydroxyl of the adenosine moiety of NAD to yield NADP. This is NAD kinase from Shewanella piezotolerans (strain WP3 / JCM 13877).